We begin with the raw amino-acid sequence, 487 residues long: Probable cytochrome P450 313a5 (487 aa).

Tyrosine 223 carries the post-translational modification Phosphotyrosine. Cysteine 433 contacts heme.

The protein belongs to the cytochrome P450 family. Heme serves as cofactor.

The protein resides in the endoplasmic reticulum membrane. It localises to the microsome membrane. May be involved in the metabolism of insect hormones and in the breakdown of synthetic insecticides. The protein is Probable cytochrome P450 313a5 (Cyp313a5) of Drosophila melanogaster (Fruit fly).